The sequence spans 364 residues: Protein spindle-F (364 aa).

A disordered region spans residues 1–26 (MEASAAKITPMASSMSASGSTNSPSS). Over residues 9–26 (TPMASSMSASGSTNSPSS) the composition is skewed to low complexity. A coiled-coil region spans residues 32-114 (ALQVALQTIK…GMVSNENRRL (83 aa)). Residue S53 is modified to Phosphoserine. The tract at residues 56 to 75 (EENQQLREASSRSEGAPRAN) is disordered. Residues S85, S172, and S202 each carry the phosphoserine modification. A coiled-coil region spans residues 210–243 (AKRCLDGLQELRREAMKQQQELRSVMTLLENRIA). A phosphoserine mark is found at S264 and S270. The UBZ1-type zinc finger occupies 310–336 (EKTCPMCGKQYSSQVSFNAFREHVEMH). Zn(2+) contacts are provided by C313 and C316. At S325 the chain carries Phosphoserine. Residues H332 and H336 each contribute to the Zn(2+) site. The residue at position 349 (S349) is a Phosphoserine.

Forms homooligomers. Interacts with the dynein light chain ctp. Interacts (via C-terminus) with IKKepsilon; this leads to phosphorylation of spn-F. Forms ternary complexes with ctp and IKKepsilon; this is required for spn-F redistribution from puncta in larval neurons and for dendrite pruning. Interacts with ctp and IKKepsilon through distinct regions. Interacts (via C-terminus) with jvl. Phosphorylated by IKKepsilon. Phosphorylation is required for spn-F neuronal distribution and dendrite pruning and reduces spn-F homooligomerization. It does not lead to spn-F degradation. In pupal bristles, localizes to the bristle tip throughout the elongation period (at protein level).

The protein resides in the cytoplasm. Its subcellular location is the cytoskeleton. It localises to the cell projection. It is found in the axon. The protein localises to the dendrite. The protein resides in the perikaryon. Functionally, plays a role in oocyte axis determination and microtubule organization during oogenesis. Also required for polarized organization of the bristle. Required, with jvl, for activation of the kinase IKKepsilon in the germ line. Also required for localization of IKKepsilon to the distal tip of elongating bristles by acting as an adapter linking IKKepsilon and cytoplasmic dynein. Involved in dendrite pruning in larval sensory neurons during metamorphosis. The protein is Protein spindle-F of Drosophila melanogaster (Fruit fly).